The following is a 104-amino-acid chain: Protein RnfH (104 aa).

The protein belongs to the UPF0125 (RnfH) family.

In Pseudomonas savastanoi pv. phaseolicola (strain 1448A / Race 6) (Pseudomonas syringae pv. phaseolicola (strain 1448A / Race 6)), this protein is Protein RnfH.